Here is a 401-residue protein sequence, read N- to C-terminus: Proline-rich protein 30 (401 aa).

The segment covering 69-80 has biased composition (polar residues); it reads PGPHFSSDSNSD. 3 disordered regions span residues 69 to 93, 129 to 191, and 357 to 401; these read PGPH…PRSS, SSSL…RGAG, and QSPK…KSPS. Composition is skewed to low complexity over residues 83–93 and 129–147; these read PPHSSSHPRSS and SSSL…QSPS. Composition is skewed to polar residues over residues 148-186 and 357-368; these read RLQD…SIKS and QSPKPSQCSRSL.

The protein is Proline-rich protein 30 (Prr30) of Mus musculus (Mouse).